Reading from the N-terminus, the 207-residue chain is MANYDVLKLDGTKSGSIELSDAVFGIEPNNSVLFEAINLQRASLRQGTHAVKNRSAVSGGGRKPWKQKGTGRARQGTIRAPQWRGGGIVFGPTPRSYAYKMPKKMRRLALRSALSFKAQENGLTVVDAFNFEAPKTKEFKNVLSTLEQPKKVLVVTENEDVNVELSARNIPGVQVTTAQGLNVLDITNADSLVITEAAAKKVEEVLG.

A disordered region spans residues 50 to 76; it reads AVKNRSAVSGGGRKPWKQKGTGRARQG.

This sequence belongs to the universal ribosomal protein uL4 family. In terms of assembly, part of the 50S ribosomal subunit.

In terms of biological role, one of the primary rRNA binding proteins, this protein initially binds near the 5'-end of the 23S rRNA. It is important during the early stages of 50S assembly. It makes multiple contacts with different domains of the 23S rRNA in the assembled 50S subunit and ribosome. Forms part of the polypeptide exit tunnel. This Staphylococcus aureus (strain JH9) protein is Large ribosomal subunit protein uL4.